Consider the following 63-residue polypeptide: DNA-directed RNA polymerase 7 kDa subunit (63 aa).

Belongs to the poxviridae DNA-directed RNA polymerase 7 kDa subunit family. As to quaternary structure, the DNA-dependent RNA polymerase used for intermediate and late genes expression consists of eight subunits 147 kDa, 133 kDa, 35 kDa, 30 kDa, 22 kDa, 19 kDa, 18 kDa and 7 kDa totalling more than 500 kDa in mass. The same holoenzyme, with the addition of the transcription-specificity factor RAP94, is used for early gene expression.

It localises to the virion. It carries out the reaction RNA(n) + a ribonucleoside 5'-triphosphate = RNA(n+1) + diphosphate. Part of the DNA-dependent RNA polymerase which catalyzes the transcription of viral DNA into RNA using the four ribonucleoside triphosphates as substrates. Responsible for the transcription of early, intermediate and late genes. DNA-dependent RNA polymerase associates with the early transcription factor (ETF) thereby allowing the early genes transcription. Late transcription, and probably also intermediate transcription, require newly synthesized RNA polymerase. The chain is DNA-directed RNA polymerase 7 kDa subunit (RPO7) from Fowlpox virus (strain NVSL) (FPV).